Reading from the N-terminus, the 424-residue chain is MLDIKFLRTNFEEVKAKLQHRGEDLTDFGRFEELDTRRRELLVQTEELKSKRNEVSQQISVLKREKKDAEALILEMREVGEKVKDLDNELRTVEEDLERLMLSIPNIPHESAPVGETEDDNVVARTWGEVKEFAFEPKPHWDLATDLGILDFERAGKVTGSRFVFYKGAGARLERALISFMLDLHTDEHGYEEVLPPYMVNRASMTGTGQLPKFEEDAFRIESEDYFLIPTAEVPVTNMHRDEILNKEQLPIRYAAFSSCFRSEAGSAGRDTRGLIRQHQFNKVELVKFVKPEDSYEELEKLTNDAERVLQLLELPYRVMSMCTGDLGFTAAKKYDIEVWIPSYGTYREISSCSNFEAFQARRANIRFRREPNGKPEHVHTLNGSGLAIGRTVAAILENYQQEDGTIIIPEVLRPYMGGKTVIK.

231 to 233 (TAE) serves as a coordination point for L-serine. 262–264 (RSE) is an ATP binding site. E285 is an L-serine binding site. Residue 349-352 (EISS) coordinates ATP. Position 385 (S385) interacts with L-serine.

It belongs to the class-II aminoacyl-tRNA synthetase family. Type-1 seryl-tRNA synthetase subfamily. In terms of assembly, homodimer. The tRNA molecule binds across the dimer.

The protein resides in the cytoplasm. The enzyme catalyses tRNA(Ser) + L-serine + ATP = L-seryl-tRNA(Ser) + AMP + diphosphate + H(+). The catalysed reaction is tRNA(Sec) + L-serine + ATP = L-seryl-tRNA(Sec) + AMP + diphosphate + H(+). It functions in the pathway aminoacyl-tRNA biosynthesis; selenocysteinyl-tRNA(Sec) biosynthesis; L-seryl-tRNA(Sec) from L-serine and tRNA(Sec): step 1/1. In terms of biological role, catalyzes the attachment of serine to tRNA(Ser). Is also able to aminoacylate tRNA(Sec) with serine, to form the misacylated tRNA L-seryl-tRNA(Sec), which will be further converted into selenocysteinyl-tRNA(Sec). This chain is Serine--tRNA ligase, found in Bacillus anthracis (strain A0248).